Consider the following 834-residue polypeptide: Periplasmic nitrate reductase (834 aa).

Positions Met-1–Ala-32 form a signal peptide, tat-type signal. A 4Fe-4S Mo/W bis-MGD-type domain is found at Leu-44–Asp-100. Cys-51, Cys-54, Cys-58, and Cys-86 together coordinate [4Fe-4S] cluster. Residues Lys-88, Gln-155, Asn-180, Cys-184, Trp-217–Met-224, Ser-248–His-252, Gln-267–Asp-269, Met-378, Gln-382, Asn-488, Ser-514–Asp-515, Lys-537, Asp-564, and Thr-724–Ser-733 each bind Mo-bis(molybdopterin guanine dinucleotide). Trp-800 serves as a coordination point for substrate. Mo-bis(molybdopterin guanine dinucleotide)-binding residues include Asn-808 and Lys-825.

The protein belongs to the prokaryotic molybdopterin-containing oxidoreductase family. NasA/NapA/NarB subfamily. In terms of assembly, component of the periplasmic nitrate reductase NapAB complex composed of NapA and NapB. Requires [4Fe-4S] cluster as cofactor. The cofactor is Mo-bis(molybdopterin guanine dinucleotide). Post-translationally, predicted to be exported by the Tat system. The position of the signal peptide cleavage has not been experimentally proven.

Its subcellular location is the periplasm. The enzyme catalyses 2 Fe(II)-[cytochrome] + nitrate + 2 H(+) = 2 Fe(III)-[cytochrome] + nitrite + H2O. Functionally, catalytic subunit of the periplasmic nitrate reductase complex NapAB. Receives electrons from NapB and catalyzes the reduction of nitrate to nitrite. This chain is Periplasmic nitrate reductase, found in Bradyrhizobium sp. (strain BTAi1 / ATCC BAA-1182).